The primary structure comprises 226 residues: V-type proton ATPase subunit E (226 aa).

This sequence belongs to the V-ATPase E subunit family. As to quaternary structure, V-ATPase is a heteromultimeric enzyme composed of a peripheral catalytic V1 complex (components A to H) attached to an integral membrane V0 proton pore complex (components: a, c, c', c'' and d).

Functionally, subunit of the peripheral V1 complex of vacuolar ATPase essential for assembly or catalytic function. V-ATPase is responsible for acidifying a variety of intracellular compartments in eukaryotic cells. This chain is V-type proton ATPase subunit E (VATE), found in Mesembryanthemum crystallinum (Common ice plant).